Here is an 83-residue protein sequence, read N- to C-terminus: Putative defensin-like protein 67 (83 aa).

Residues 1–24 (MGSSKLMVTCIVVAMLTISCDILS) form the signal peptide. Disulfide bonds link Cys-38-Cys-82, Cys-42-Cys-65, Cys-51-Cys-80, and Cys-55-Cys-81.

Belongs to the DEFL family.

Its subcellular location is the secreted. This Arabidopsis thaliana (Mouse-ear cress) protein is Putative defensin-like protein 67.